Here is a 234-residue protein sequence, read N- to C-terminus: Demethylmenaquinone methyltransferase (234 aa).

S-adenosyl-L-methionine-binding positions include Thr-58, Asp-79, and 106–107; that span reads NA.

It belongs to the class I-like SAM-binding methyltransferase superfamily. MenG/UbiE family.

It carries out the reaction a 2-demethylmenaquinol + S-adenosyl-L-methionine = a menaquinol + S-adenosyl-L-homocysteine + H(+). It participates in quinol/quinone metabolism; menaquinone biosynthesis; menaquinol from 1,4-dihydroxy-2-naphthoate: step 2/2. Functionally, methyltransferase required for the conversion of demethylmenaquinol (DMKH2) to menaquinol (MKH2). The protein is Demethylmenaquinone methyltransferase of Geobacillus kaustophilus (strain HTA426).